We begin with the raw amino-acid sequence, 204 residues long: Molybdenum cofactor guanylyltransferase (204 aa).

GTP contacts are provided by residues 12–14 (LAG), lysine 25, asparagine 53, aspartate 71, and aspartate 101. Residue aspartate 101 coordinates Mg(2+).

Belongs to the MobA family. Monomer. Mg(2+) serves as cofactor.

It is found in the cytoplasm. It catalyses the reaction Mo-molybdopterin + GTP + H(+) = Mo-molybdopterin guanine dinucleotide + diphosphate. Its function is as follows. Transfers a GMP moiety from GTP to Mo-molybdopterin (Mo-MPT) cofactor (Moco or molybdenum cofactor) to form Mo-molybdopterin guanine dinucleotide (Mo-MGD) cofactor. This chain is Molybdenum cofactor guanylyltransferase, found in Ralstonia pickettii (strain 12J).